A 665-amino-acid chain; its full sequence is MNRATITSNKSNAPSFLSIPLLAHNNNINNNNNNINNNNNNNNINSNNNGTTTTTTTTTITTISYKNNISELITIIDKIIKDLNNFKSKTVLNDQEFSELNNTIQFTKTSLVNYIHYENENKINFNLSDSKIICSEIKIIEYGIESFIFSICKLYQDLIQFQQLLLKLSSPPTTITFNTTINSTNSFTSNLIINNLLKVDSILKQSIDQLLALFPPSSSSLNNENNNNNNNNYNPYELLSNEAKVLWNQFGGNKITFVPWSIFFKGFQKFFNKEILAYESSLRYTLDFTRDGYVTPFKLSVFIKWFGALPVSLGIFQDVINSKIFSGFISGIEATQLLSRQQVGYYLLRCSKTIVGAFAITFVDSTNHIRHCLLYPVTSSINGGLTLQKPPDIFKSILSFILSFSSKLKYPIGPLDNDLLPPLSIINNNPILILPDENNNNQNNNQNNNNNNINTFSTSPSSFFTIDSSNSSDTNKSPTKSRKSSFKNDKDKKEKEKEKGKDKEKEKERVSDENFDNLPTFLNSEDENDNNNNNNNNNNNNNNNNNNNNNNNNNNSSNNNNCNIKETHQTTSNGSSGNNNNNNNNNNNNNNNNNNNNSSSTTKRNNNNNGSDESKDLCTVCMDNEINTVFLECGHLSCCSLCSVKLKKCPICRSRITRVINIFKS.

The tract at residues 30-50 is disordered; sequence NNNNNINNNNNNNNINSNNNG. Residues 109 to 231 are 4H; the sequence is TSLVNYIHYE…NNENNNNNNN (123 aa). The Cbl-PTB domain maps to 109 to 400; sequence TSLVNYIHYE…PDIFKSILSF (292 aa). Residues 232–306 form an EF-hand-like region; it reads NYNPYELLSN…FKLSVFIKWF (75 aa). 4 residues coordinate Ca(2+): Asp-287, Thr-289, Asp-291, and Tyr-293. The SH2-like stretch occupies residues 307-400; the sequence is GALPVSLGIF…PDIFKSILSF (94 aa). 2 disordered regions span residues 437–456 and 467–609; these read ENNN…INTF and DSSN…NNNN. Residues 467-478 show a composition bias toward low complexity; it reads DSSNSSDTNKSP. Residues 479 to 544 adopt a coiled-coil conformation; that stretch reads TKSRKSSFKN…NNNNNNNNNN (66 aa). Over residues 486–512 the composition is skewed to basic and acidic residues; sequence FKNDKDKKEKEKEKGKDKEKEKERVSD. Low complexity-rich tracts occupy residues 530–561 and 571–609; these read NNNN…NNNN and TSNG…NNNN. Residues 618-653 form an RING-type zinc finger; it reads CTVCMDNEINTVFLECGHLSCCSLCSVKLKKCPICR.

In terms of processing, ubiquitinated.

Its subcellular location is the cytoplasm. The protein resides in the nucleus. It carries out the reaction S-ubiquitinyl-[E2 ubiquitin-conjugating enzyme]-L-cysteine + [acceptor protein]-L-lysine = [E2 ubiquitin-conjugating enzyme]-L-cysteine + N(6)-ubiquitinyl-[acceptor protein]-L-lysine.. It participates in protein modification; protein ubiquitination. In terms of biological role, acts as an E3 ubiquitin-protein ligase, which accepts ubiquitin from specific E2 ubiquitin-conjugating enzymes, and then transfers it to substrates promoting their degradation by the proteasome. Up-regulates STATc tyrosine phosphorylation via an inhibitory effect on ptpC accumulation. Recognizes activated receptor tyrosine kinases, RTKs and terminates signaling. The sequence is that of E3 ubiquitin-protein ligase cblA (cblA-1) from Dictyostelium discoideum (Social amoeba).